We begin with the raw amino-acid sequence, 105 residues long: Flagellar transcriptional regulator FlhD (105 aa).

It belongs to the FlhD family. As to quaternary structure, homodimer; disulfide-linked. Forms a heterohexamer composed of two FlhC and four FlhD subunits. Each FlhC binds a FlhD dimer, forming a heterotrimer, and a hexamer assembles by dimerization of two heterotrimers.

It is found in the cytoplasm. Functionally, functions in complex with FlhC as a master transcriptional regulator that regulates transcription of several flagellar and non-flagellar operons by binding to their promoter region. Activates expression of class 2 flagellar genes, including fliA, which is a flagellum-specific sigma factor that turns on the class 3 genes. Also regulates genes whose products function in a variety of physiological pathways. The sequence is that of Flagellar transcriptional regulator FlhD from Nitrosomonas eutropha (strain DSM 101675 / C91 / Nm57).